We begin with the raw amino-acid sequence, 317 residues long: Putative methyltransferase YMR310C (317 aa).

Ser190 is modified (phosphoserine).

Belongs to the class IV-like SAM-binding methyltransferase superfamily.

It is found in the nucleus. The sequence is that of Putative methyltransferase YMR310C from Saccharomyces cerevisiae (strain ATCC 204508 / S288c) (Baker's yeast).